We begin with the raw amino-acid sequence, 205 residues long: RNA pyrophosphohydrolase (205 aa).

The Nudix hydrolase domain maps to 6–149 (GFRPNVGIVL…KRGVYARALR (144 aa)). A Nudix box motif is present at residues 38-59 (GGMNTDETPVEAMYRELREETG). The tract at residues 178–205 (GSSAAGHDSPRKRPRKRNGARAMRINND) is disordered. Over residues 187-196 (PRKRPRKRNG) the composition is skewed to basic residues.

The protein belongs to the Nudix hydrolase family. RppH subfamily. It depends on a divalent metal cation as a cofactor.

Accelerates the degradation of transcripts by removing pyrophosphate from the 5'-end of triphosphorylated RNA, leading to a more labile monophosphorylated state that can stimulate subsequent ribonuclease cleavage. This is RNA pyrophosphohydrolase from Xanthomonas axonopodis pv. citri (strain 306).